The sequence spans 383 residues: Glutamyl-tRNA reductase (383 aa).

Substrate is bound by residues 38–41, serine 82, 87–89, and glutamine 93; these read TCNR and EDQ. The active-site Nucleophile is cysteine 39. 161-166 contacts NADP(+); that stretch reads GAGEIA.

Belongs to the glutamyl-tRNA reductase family. As to quaternary structure, homodimer.

It catalyses the reaction (S)-4-amino-5-oxopentanoate + tRNA(Glu) + NADP(+) = L-glutamyl-tRNA(Glu) + NADPH + H(+). It participates in porphyrin-containing compound metabolism; protoporphyrin-IX biosynthesis; 5-aminolevulinate from L-glutamyl-tRNA(Glu): step 1/2. In terms of biological role, catalyzes the NADPH-dependent reduction of glutamyl-tRNA(Glu) to glutamate 1-semialdehyde (GSA). This Methanococcus aeolicus (strain ATCC BAA-1280 / DSM 17508 / OCM 812 / Nankai-3) protein is Glutamyl-tRNA reductase.